Consider the following 419-residue polypeptide: Tetraspanning orphan receptor (419 aa).

Residues 1-28 (MPRAPALLTNDARHQFTCCLCLHVRTGT) are Cytoplasmic-facing. A helical membrane pass occupies residues 29–49 (IIFGITQIIIQLVFISFLFLM). Topologically, residues 50–165 (TFNPRLIPED…EVKIKHFSPY (116 aa)) are extracellular. A helical membrane pass occupies residues 166–186 (IAVCVTTFSLAFCCFMVHGAI). The Cytoplasmic segment spans residues 187-193 (TKQPTHL). Residues 194-214 (LPFFFIQVFDLIICLIHILGF) form a helical membrane-spanning segment. At 215-240 (MSSTSDLRLMIHTKTGPIYIKSTGFT) the chain is on the extracellular side. Residues 241-261 (FIILSISCMMLAFKAYCLGMV) traverse the membrane as a helical segment. Residues 262–419 (WDCYKYLMLN…SAPSNAHSSC (158 aa)) are Cytoplasmic-facing. The span at 303–316 (NNSIGNSGSPNEPN) shows a compositional bias: low complexity. The interval 303-328 (NNSIGNSGSPNEPNTRPRPEPITYDP) is disordered.

Interacts (via N-terminal extracellular domain) with human C2a. In terms of processing, phosphorylated on tyrosine residues.

The protein resides in the cell membrane. Functionally, cell surface receptor that binds to human complement C2a protein. This results in inhibition of the classical and lectin pathways of complement activation, probably due to interference with binding of C2a to C4b and interference with cleavage by C1 or MASP2 such that C3 convertase cannot be formed. This infers resistance to complement-mediated cell lysis, allowing parasite survival and infection. The chain is Tetraspanning orphan receptor from Schistosoma mansoni (Blood fluke).